The primary structure comprises 389 residues: Ribonucleoside-diphosphate reductase subunit M2 (389 aa).

Position 20 is a phosphoserine (S20). T33 is modified (phosphothreonine). The Cy signature appears at 49–51; sequence RRI. Fe cation is bound by residues D138, E169, and H172. Y176 is an active-site residue. 3 residues coordinate Fe cation: E232, E266, and H269.

This sequence belongs to the ribonucleoside diphosphate reductase small chain family. In terms of assembly, heterodimer of a large and a small subunit. Interacts (via Cy motif and when phosphorylated at Thr-33) with CCNF; the interaction occurs exclusively in G2 and early M. Fe cation serves as cofactor. Phosphorylation on Ser-20 relieves the inhibitory effect on Wnt signaling. Phosphorylated on Thr-33 by CDK1 and CDK2; predominantly in G2 and M phase. In terms of processing, ubiquitinated by the SCF(CCNF) E3 ubiquitin-protein ligase complex; leading to its degradation by the proteasome.

The protein localises to the cytoplasm. It localises to the nucleus. The enzyme catalyses a 2'-deoxyribonucleoside 5'-diphosphate + [thioredoxin]-disulfide + H2O = a ribonucleoside 5'-diphosphate + [thioredoxin]-dithiol. In terms of biological role, provides the precursors necessary for DNA synthesis. Catalyzes the biosynthesis of deoxyribonucleotides from the corresponding ribonucleotides. Inhibits Wnt signaling. The sequence is that of Ribonucleoside-diphosphate reductase subunit M2 (RRM2) from Macaca fascicularis (Crab-eating macaque).